The sequence spans 288 residues: MNYKLKTRSEWLDEYHQGVRYGLQGKLILEESSPFQKITIYESKRYGKALLLDDCWMTAEKSEKCYHECLIHPALCCSTQIENILIIGGGDGGSARECLKYKEVKSIDLVEIDLRVIELSQKYLPTIGGDAWSDSRLNLQIKNGIDWVKHTQENSYDVIIIDGADPIGPSKELFSNSFLKDCKRILKQGGVLATQSESPESFQKIHINIVKVLREIFDYADPMYGSVSIYPSGLWSWTFASMKQQRYMHPKKSRVKEISENCQIWSTRWQQGAFNSIPAFIERELAKK.

A PABS domain is found at 9 to 242 (SEWLDEYHQG…GLWSWTFASM (234 aa)). Residue Gln-36 participates in S-methyl-5'-thioadenosine binding. Residues His-67 and Asp-91 each coordinate spermidine. S-methyl-5'-thioadenosine contacts are provided by residues Glu-111 and 143–144 (NG). Residue Asp-162 is the Proton acceptor of the active site. Residue Pro-169 coordinates S-methyl-5'-thioadenosine.

This sequence belongs to the spermidine/spermine synthase family. As to quaternary structure, homodimer or homotetramer.

It is found in the cytoplasm. The catalysed reaction is S-adenosyl 3-(methylsulfanyl)propylamine + putrescine = S-methyl-5'-thioadenosine + spermidine + H(+). It participates in amine and polyamine biosynthesis; spermidine biosynthesis; spermidine from putrescine: step 1/1. Functionally, catalyzes the irreversible transfer of a propylamine group from the amino donor S-adenosylmethioninamine (decarboxy-AdoMet) to putrescine (1,4-diaminobutane) to yield spermidine. The chain is Polyamine aminopropyltransferase from Prochlorococcus marinus (strain NATL2A).